The primary structure comprises 33 residues: Photosystem II reaction center protein Psb30 (33 aa).

Residues 5 to 25 form a helical membrane-spanning segment; that stretch reads LIGQLVTVALVVGAGPIIIGA.

It belongs to the Psb30/Ycf12 family. PSII is composed of 1 copy each of membrane proteins PsbA, PsbB, PsbC, PsbD, PsbE, PsbF, PsbH, PsbI, PsbJ, PsbK, PsbL, PsbM, PsbT, PsbX, PsbY, PsbZ, Psb30/Ycf12, peripheral proteins of the oxygen-evolving complex and a large number of cofactors. It forms dimeric complexes.

The protein resides in the plastid. Its subcellular location is the chloroplast thylakoid membrane. Its function is as follows. A core subunit of photosystem II (PSII), probably helps stabilize the reaction center. This chain is Photosystem II reaction center protein Psb30, found in Ostreococcus tauri.